The following is a 1673-amino-acid chain: AF4/FMR2 family member lilli (1673 aa).

Disordered stretches follow at residues 1-24 (MAQQQQQQMQQQQQHHTSSINNNN), 54-80 (YSQNYNMEEYERRKRREREKIERQQGI), 125-302 (SRSA…PPEK), 407-534 (QLPP…GAQN), 575-604 (VGTGSGSGGTLSSGGSSSNKTPSPTESNKW), 722-1086 (RLSD…INTL), 1114-1133 (QGKLDAAAQPSAPQAPPAAP), 1141-1160 (RMTPTQQQQLGAGLASPART), and 1187-1315 (KLTP…MGKE). Positions 71–80 (REKIERQQGI) are enriched in basic and acidic residues. 2 stretches are compositionally biased toward low complexity: residues 146 to 180 (SLGHSPSSASSAAGPTAASATTSLPGQQQHYQQQQ) and 223 to 244 (PRTSSSNSNSSSVTNNASSGGV). Residue Thr420 is modified to Phosphothreonine. Over residues 428–441 (LKTEKNHSLEKQDS) the composition is skewed to basic and acidic residues. Over residues 443–454 (LENDLELSESED) the composition is skewed to acidic residues. Phosphoserine occurs at positions 450 and 452. A compositionally biased stretch (low complexity) spans 465–486 (GNSSNSSESDSSESGSESSSKN). A compositionally biased stretch (basic residues) spans 491 to 500 (HPNHQQHHHQ). Positions 501 to 525 (LQQQQQQQQATMQQQQVLQQQHRSQ) are enriched in low complexity. Positions 577–586 (TGSGSGGTLS) are enriched in gly residues. Residues 594 to 604 (KTPSPTESNKW) show a composition bias toward polar residues. Low complexity predominate over residues 724–757 (SDSGTSASGSSSSSSSSSDSAMGGEVVPMPGPGE). Polar residues predominate over residues 775–788 (QPTQSQKAPPSNSV). Basic residues predominate over residues 802-812 (QRQKKPRKKKA). Residues Ser821 and Ser822 each carry the phosphoserine modification. Residues 851–863 (KKGRGRPRKQQQS) constitute a DNA-binding region (a.T hook). Low complexity predominate over residues 860–898 (QQQSGGSGNLSSASAGSSSQTKGPTLTAAKKPLAKTPLA). Residues Ser871 and Ser873 each carry the phosphoserine modification. Over residues 909 to 919 (SQSSSNGNTPT) the composition is skewed to polar residues. Low complexity-rich tracts occupy residues 949–965 (SSSAESSSKSSSSSSSS) and 993–1004 (GSGSSSPSSSGS). Polar residues predominate over residues 1011-1022 (TRSQVGSGQALA). Residues 1034–1060 (SQHSQHLSSSDCSSSSGGCTAVCSSSS) show a composition bias toward low complexity. Positions 1065–1082 (EGRREKERERKPKSDKNK) are enriched in basic and acidic residues. Residues 1190-1205 (PAQQNGHLTPKDQATN) are compositionally biased toward polar residues. Basic and acidic residues-rich tracts occupy residues 1226–1243 (EHPVKPEPELDAGYEAKF) and 1252–1282 (FQLKQERDRDRERERERERERERDREREQPP). Residue Ser1362 is modified to Phosphoserine. Residue Thr1364 is modified to Phosphothreonine. Residues 1564–1583 (NTPSSISPSNSVGSQGSGSN) show a composition bias toward low complexity. The interval 1564 to 1588 (NTPSSISPSNSVGSQGSGSNTPPGR) is disordered.

The protein belongs to the AF4 family. In terms of assembly, component of the super elongation complex (SEC), at least composed of Ell, Cdk9, cyclin-T (CycT), lilli and ear.

It is found in the nucleus. Functionally, has a role in transcriptional regulation. Acts in parallel with the Ras/MAPK and the PI3K/PKB pathways in the control of cell identity and cellular growth. Essential for regulation of the cytoskeleton and cell growth but not for cell proliferation or growth rate. Required specifically for the microtubule-based basal transport of lipid droplets. Plays a partially redundant function downstream of Raf in cell fate specification in the developing eye. Pair-rule protein that regulates embryonic cellularization, gastrulation and segmentation. The polypeptide is AF4/FMR2 family member lilli (Drosophila melanogaster (Fruit fly)).